A 117-amino-acid polypeptide reads, in one-letter code: Putative small ubiquitin-related modifier 6 (117 aa).

Residues 1–30 form a disordered region; the sequence is MSTKSSSIHGRNEVKMEGEKRKDVESESTH. A compositionally biased stretch (basic and acidic residues) spans 10 to 28; it reads GRNEVKMEGEKRKDVESES. One can recognise a Ubiquitin-like domain in the interval 31–108; sequence VTLNVKGQDE…IDALLPQESG (78 aa). A Glycyl lysine isopeptide (Gly-Lys) (interchain with K-? in acceptor proteins) cross-link involves residue Gly-108.

It belongs to the ubiquitin family. SUMO subfamily. Interacts with SAE2, SCE1, SIZ1 and MMS21 Covalently attached to a number of proteins.

The protein resides in the nucleus. It localises to the cytoplasm. Functionally, ubiquitin-like protein which can be covalently attached to target lysines as a monomer. Does not seem to be involved in protein degradation and may function as an antagonist of ubiquitin in the degradation process. The polypeptide is Putative small ubiquitin-related modifier 6 (SUMO6) (Arabidopsis thaliana (Mouse-ear cress)).